The sequence spans 541 residues: Ankyrin repeat domain-containing protein 13C (541 aa).

Residues Met1–Gly20 are compositionally biased toward basic and acidic residues. The tract at residues Met1–Asp27 is disordered. 3 ANK repeats span residues Pro111–Asn142, His143–Val172, and Gln176–Arg205. Ser411 is subject to Phosphoserine.

It is found in the endoplasmic reticulum membrane. Functionally, acts as a molecular chaperone for G protein-coupled receptors, regulating their biogenesis and exit from the ER. The protein is Ankyrin repeat domain-containing protein 13C (ANKRD13C) of Homo sapiens (Human).